We begin with the raw amino-acid sequence, 250 residues long: Kv channel-interacting protein 4 (250 aa).

Residues 2–44 (NVRRVESISAQLEEASSTGGFLYAQNNTKRSIKERLMKLLPCS) are KIS. Ser-17 and Ser-56 each carry phosphoserine. The region spanning 61 to 117 (LEMATVRHRPEALELLEAQSKFTKKELQILYRGFKNECPSGVVNEETFKEIYSQFFP) is the EF-hand 1; degenerate domain. 3 consecutive EF-hand domains span residues 120-155 (DSTTYAHFLFNAFDTDHNGAVSFEDFIKGLSILLRG), 156-191 (TVQEKLNWAFNLYDINKDGYITKEEMLDIMKAIYDM), and 204-239 (APRQHVETFFQKMDKNKDGVVTIDEFIESCQKDENI). 13 residues coordinate Ca(2+): Asp-133, Asp-135, Asn-137, Asp-144, Asp-169, Asn-171, Asp-173, Tyr-175, Glu-180, Asp-217, Asn-219, Asp-221, and Glu-228. The tract at residues 237–250 (ENIMRSMQLFENVI) is interaction with KCND2.

This sequence belongs to the recoverin family. As to quaternary structure, component of heteromultimeric potassium channels. Identified in potassium channel complexes containing KCND1, KCND2, KCND3, KCNIP1, KCNIP2, KCNIP3, KCNIP4, DPP6 and DPP10. Interacts with the C-terminus of PSEN2 and probably PSEN1. Interacts with KCND2 and KCND3. In terms of tissue distribution, expressed in brain. Highly expressed by neurons in layers II-IV of cortex and in hippocampus, thalamus and the Purkinje cell layer of the cerebellum.

The protein localises to the cell membrane. Its subcellular location is the cytoplasm. It is found in the peroxisome. Functionally, regulatory subunit of Kv4/D (Shal)-type voltage-gated rapidly inactivating A-type potassium channels, such as KCND2/Kv4.2 and KCND3/Kv4.3. Modulates channel expression at the cell membrane, gating characteristics, inactivation kinetics and rate of recovery from inactivation in a calcium-dependent and isoform-specific manner. In Mus musculus (Mouse), this protein is Kv channel-interacting protein 4 (Kcnip4).